Reading from the N-terminus, the 311-residue chain is Putative RNA-binding protein R05D3.8 (311 aa).

The RRM domain maps to 155–235 (KRLFVSYFPL…RRAVLKESVK (81 aa)). Over residues 261–270 (TPSRPVTSVH) the composition is skewed to polar residues. Positions 261–311 (TPSRPVTSVHASSSASSNHYDPSAAAGYAPLYHQPPESDPLSQCGYGPRKW) are disordered.

This Caenorhabditis elegans protein is Putative RNA-binding protein R05D3.8.